Here is a 275-residue protein sequence, read N- to C-terminus: Large ribosomal subunit protein uL2 (275 aa).

The segment at 218–275 (RPQTRGSAMNPIDHPHGGGEGKTNSGRHPVSPWGMPTKGYKTRKKKASDKLIISKRKK) is disordered. The segment covering 257-275 (YKTRKKKASDKLIISKRKK) has biased composition (basic residues).

It belongs to the universal ribosomal protein uL2 family. Part of the 50S ribosomal subunit. Forms a bridge to the 30S subunit in the 70S ribosome.

Functionally, one of the primary rRNA binding proteins. Required for association of the 30S and 50S subunits to form the 70S ribosome, for tRNA binding and peptide bond formation. It has been suggested to have peptidyltransferase activity; this is somewhat controversial. Makes several contacts with the 16S rRNA in the 70S ribosome. The chain is Large ribosomal subunit protein uL2 from Sulfurovum sp. (strain NBC37-1).